Reading from the N-terminus, the 304-residue chain is Quinolinate synthase (304 aa).

2 residues coordinate iminosuccinate: H23 and S40. Position 85 (C85) interacts with [4Fe-4S] cluster. Iminosuccinate contacts are provided by residues 111 to 113 (YVN) and S128. C171 provides a ligand contact to [4Fe-4S] cluster. Iminosuccinate contacts are provided by residues 197–199 (HPE) and T214. C259 contacts [4Fe-4S] cluster.

Belongs to the quinolinate synthase family. Type 2 subfamily. It depends on [4Fe-4S] cluster as a cofactor.

It localises to the cytoplasm. It catalyses the reaction iminosuccinate + dihydroxyacetone phosphate = quinolinate + phosphate + 2 H2O + H(+). Its pathway is cofactor biosynthesis; NAD(+) biosynthesis; quinolinate from iminoaspartate: step 1/1. Its function is as follows. Catalyzes the condensation of iminoaspartate with dihydroxyacetone phosphate to form quinolinate. This chain is Quinolinate synthase, found in Pelobacter propionicus (strain DSM 2379 / NBRC 103807 / OttBd1).